We begin with the raw amino-acid sequence, 647 residues long: Threonine--tRNA ligase (647 aa).

Positions 1-63 (MDKINITFPD…EEDGSIEIVT (63 aa)) constitute a TGS domain. The catalytic stretch occupies residues 242-540 (DHRKIGKELD…LTEETKGAFP (299 aa)). Zn(2+) is bound by residues Cys-336, His-387, and His-517.

Belongs to the class-II aminoacyl-tRNA synthetase family. In terms of assembly, homodimer. It depends on Zn(2+) as a cofactor.

The protein resides in the cytoplasm. It carries out the reaction tRNA(Thr) + L-threonine + ATP = L-threonyl-tRNA(Thr) + AMP + diphosphate + H(+). Functionally, catalyzes the attachment of threonine to tRNA(Thr) in a two-step reaction: L-threonine is first activated by ATP to form Thr-AMP and then transferred to the acceptor end of tRNA(Thr). Also edits incorrectly charged L-seryl-tRNA(Thr). This Staphylococcus carnosus (strain TM300) protein is Threonine--tRNA ligase.